The primary structure comprises 425 residues: MRDKISESTRNIFDTVWKRIFPFHEMILSRPAVLSYSGGKDSSLLLHFYFWLWAEKKIPVPCIYHLDHSIRFNLEQEKKILDYTESTFPFPNLFKKKNIPALSQKLGKTLEETGRAFRYKDLEKISNQYEGYIVTGHHSTDYLETVFLNLIRGGGWNSLRTLGWYEKNRFRPLFAFTEDEIKTISQSESWPIFEDESNQSNEYLRNRIRNYILPLLLQEGADPDRIYKNFHRMEKPTSKILLKEVSSHKTPSFLKIDVWVLNDLSERERKFFIDRYLRSLNLHPTTRNFFQDLMDCLKKMNSFGIENKEAWFWKSSSYDLYVIPKNSLCLKKFKLESKNMILKWNGSQKKISPGFIPGLCSPGAKIRKNGMSIEISEILRQKEIPVPVRKMLPILYREGKVDVICLSLWDPRLGDIVADRSRNFI.

Residue 37 to 42 (SGGKDS) coordinates ATP.

Belongs to the tRNA(Ile)-lysidine synthase family.

It is found in the cytoplasm. The catalysed reaction is cytidine(34) in tRNA(Ile2) + L-lysine + ATP = lysidine(34) in tRNA(Ile2) + AMP + diphosphate + H(+). Its function is as follows. Ligates lysine onto the cytidine present at position 34 of the AUA codon-specific tRNA(Ile) that contains the anticodon CAU, in an ATP-dependent manner. Cytidine is converted to lysidine, thus changing the amino acid specificity of the tRNA from methionine to isoleucine. The protein is tRNA(Ile)-lysidine synthase of Leptospira borgpetersenii serovar Hardjo-bovis (strain JB197).